A 205-amino-acid chain; its full sequence is Probable transcription factor Ken (205 aa).

C2H2-type zinc fingers lie at residues 106–128 (YRCEYCGKQFGMSWNLKTHLRVH), 134–157 (FACRLCVAMFKQKAHLLKHLCSVH), and 173–196 (YSCCFCSMCFESVQELVRHLSGHH).

The protein resides in the nucleus. In terms of biological role, probable transcription factor, which is required for terminalia development. The sequence is that of Probable transcription factor Ken (ken) from Drosophila yakuba (Fruit fly).